We begin with the raw amino-acid sequence, 253 residues long: MASSAVSLQSISMTTLNNLSCNQQFHRSSLLGSSKSFQNLGISSNGSDFSYPSSFTAKKNLTASRALSQNGNIENPRPSKVQELSVYEINELDRHSPKILKNAFSLMFGLGDLVPFTNKLYTGDLKKRVGITAGLCVVIEHVPEKKGERFEATYSFYFGDYGHLSVQGPYLTYEDSFLAITGGAGIFEGAYGQVKLQQLVYPTKLFYTFYLKGLANDLPLELTGTPVPPSKDIEPAPEAKALEPSGVISNYTN.

The N-terminal 77 residues, 1 to 77 (MASSAVSLQS…SQNGNIENPR (77 aa)), are a transit peptide targeting the chloroplast.

The protein belongs to the allene oxide cyclase family. Highly expressed in fully developed leaves.

It localises to the plastid. The protein localises to the chloroplast. The catalysed reaction is (9Z,13S,15Z)-12,13-epoxyoctadeca-9,11,15-trienoate = (9S,13S,15Z)-12-oxophyto-10,15-dienoate. Functionally, involved in the production of 12-oxo-phytodienoic acid (OPDA), a precursor of jasmonic acid. This is Allene oxide cyclase 2, chloroplastic (AOC2) from Arabidopsis thaliana (Mouse-ear cress).